A 262-amino-acid polypeptide reads, in one-letter code: Small ribosomal subunit protein uS2 (262 aa).

The protein belongs to the universal ribosomal protein uS2 family.

This chain is Small ribosomal subunit protein uS2, found in Borreliella burgdorferi (strain ZS7) (Borrelia burgdorferi).